The chain runs to 151 residues: MKLILTADVDNLGAPGDTVEVKDGYGRNYLLPRGLAIVATRGAEKQVEGIRRAQEARAVRGLDHAKELKAAIEGLESVTLTVKTAGGSGKLFGSVTVADVAAAIKAAGGPIVDKRSIVLPKAHIKNTGKHAVVVNLHPDVVAKFNLNVVGA.

It belongs to the bacterial ribosomal protein bL9 family.

Functionally, binds to the 23S rRNA. This is Large ribosomal subunit protein bL9 from Rhodococcus erythropolis (strain PR4 / NBRC 100887).